The following is a 400-amino-acid chain: Enoyl-[acyl-carrier-protein] reductase [NADH] 2 (400 aa).

NAD(+) contacts are provided by residues 48–53 (GASSGF), 75–76 (FE), 112–113 (DA), and 141–142 (LA). Tyr228 contacts substrate. The Proton donor role is filled by Tyr238. Residues Lys247 and 276–278 (LVT) contribute to the NAD(+) site.

The protein belongs to the TER reductase family. As to quaternary structure, monomer.

The catalysed reaction is a 2,3-saturated acyl-[ACP] + NAD(+) = a (2E)-enoyl-[ACP] + NADH + H(+). Its pathway is lipid metabolism; fatty acid biosynthesis. Functionally, involved in the final reduction of the elongation cycle of fatty acid synthesis (FAS II). Catalyzes the reduction of a carbon-carbon double bond in an enoyl moiety that is covalently linked to an acyl carrier protein (ACP). In Vibrio vulnificus (strain CMCP6), this protein is Enoyl-[acyl-carrier-protein] reductase [NADH] 2.